The following is a 245-amino-acid chain: Small ribosomal subunit protein uS3 (245 aa).

The 69-residue stretch at 39-107 (IRKAIREKLK…EVRVNLVEIR (69 aa)) folds into the KH type-2 domain. Residues 216 to 245 (DKRLETSGQSRARANTNQRGPASGAQAAGA) form a disordered region. Polar residues predominate over residues 221-235 (TSGQSRARANTNQRG).

Belongs to the universal ribosomal protein uS3 family. As to quaternary structure, part of the 30S ribosomal subunit. Forms a tight complex with proteins S10 and S14.

Binds the lower part of the 30S subunit head. Binds mRNA in the 70S ribosome, positioning it for translation. The protein is Small ribosomal subunit protein uS3 of Hyphomonas neptunium (strain ATCC 15444).